A 319-amino-acid chain; its full sequence is Beta-ketoacyl-[acyl-carrier-protein] synthase III (319 aa).

Active-site residues include Cys-114 and His-246. An ACP-binding region spans residues Gln-247–Arg-251. Asn-276 is a catalytic residue.

The protein belongs to the thiolase-like superfamily. FabH family. In terms of assembly, homodimer.

Its subcellular location is the cytoplasm. The catalysed reaction is malonyl-[ACP] + acetyl-CoA + H(+) = 3-oxobutanoyl-[ACP] + CO2 + CoA. Its pathway is lipid metabolism; fatty acid biosynthesis. Its function is as follows. Catalyzes the condensation reaction of fatty acid synthesis by the addition to an acyl acceptor of two carbons from malonyl-ACP. Catalyzes the first condensation reaction which initiates fatty acid synthesis and may therefore play a role in governing the total rate of fatty acid production. Possesses both acetoacetyl-ACP synthase and acetyl transacylase activities. Its substrate specificity determines the biosynthesis of branched-chain and/or straight-chain of fatty acids. This Thiobacillus denitrificans (strain ATCC 25259 / T1) protein is Beta-ketoacyl-[acyl-carrier-protein] synthase III.